An 818-amino-acid polypeptide reads, in one-letter code: Sorting nexin-29 (818 aa).

In terms of domain architecture, RUN spans 36–180; the sequence is SDSDSRVTCL…ILFAINIDNK (145 aa). Residues 267 to 299 form a disordered region; the sequence is VSFDDDEEEQGTGDTLKKMPGTAESSEENSDRS. A phosphoserine mark is found at Ser-268, Ser-291, Ser-292, Ser-330, Ser-344, Ser-447, and Ser-452. Disordered stretches follow at residues 343-375 and 441-462; these read KSIDDDVDENEEDAYRSPLGRGHTGHAESPDRT and RYREASSPGQGSPLSSLLPSAS. Low complexity predominate over residues 445–462; the sequence is ASSPGQGSPLSSLLPSAS. Residues 467-547 are a coiled coil; that stretch reads MTVHELRQAI…VLKVQLKKYV (81 aa). Ser-642 is subject to Phosphoserine. Thr-644 carries the post-translational modification Phosphothreonine. A phosphoserine mark is found at Ser-645 and Ser-649. The 124-residue stretch at 659-782 folds into the PX domain; it reads ALINVWIPSV…PFFVDITPPG (124 aa). The segment at 781–818 is disordered; it reads PGEPLNKSSRPKAVSRFPKLSRGHPREVRNVEPQSGDL.

Belongs to the sorting nexin family.

In Mus musculus (Mouse), this protein is Sorting nexin-29 (Snx29).